Here is a 1552-residue protein sequence, read N- to C-terminus: ABC multidrug transporter lscH (1552 aa).

The next 2 helical transmembrane spans lie at 32 to 52 and 68 to 88; these read ETIL…IPII and WFKK…VGLW. Asn91 is a glycosylation site (N-linked (GlcNAc...) asparagine). The next 8 helical transmembrane spans lie at 100-120, 158-178, 280-300, 311-331, 413-433, 457-477, 500-520, and 528-548; these read STPS…LSTI, HSAI…MLLL, LFQI…IELA, NGYG…VSVG, AACV…VFLA, ALAS…FSVI, ILSI…FAGI, and LTIA…SPLA. Residues 280–559 form the ABC transmembrane type-1 1 domain; sequence LFQIGFTYAQ…IVQALPQISG (280 aa). Positions 573 to 655 are disordered; the sequence is AEERHDPRST…PDANGDSRDA (83 aa). The span at 581–602 shows a compositional bias: polar residues; that stretch reads STTTGTSPESNNGSQQTLSDKQ. Asn592 is a glycosylation site (N-linked (GlcNAc...) asparagine). The 246-residue stretch at 639-884 folds into the ABC transporter 1 domain; that stretch reads GHLADTTPDA…AELGWADRDL (246 aa). Residue 676-683 coordinates ATP; the sequence is GPVGCGKS. N-linked (GlcNAc...) asparagine glycans are attached at residues Asn719 and Asn834. The segment covering 887–912 has biased composition (basic and acidic residues); it reads QQEKPGKDELNHEHGEYSESAPEKLR. The segment at 887 to 917 is disordered; the sequence is QQEKPGKDELNHEHGEYSESAPEKLRRSQTN. A run of 2 helical transmembrane segments spans residues 957 to 977 and 1005 to 1025; these read GWLT…CDSF and AVLG…LFII. An ABC transmembrane type-1 2 domain is found at 963–1241; that stretch reads IFVIAICVYA…ATITSWVTLE (279 aa). Asn1028 carries an N-linked (GlcNAc...) asparagine glycan. The next 4 membrane-spanning stretches (helical) occupy residues 1076–1096, 1100–1120, 1184–1204, and 1210–1230; these read AALG…LVCV, YMAA…HFYL, WITF…IVLT, and AIGP…SATM. The ABC transporter 2 domain maps to 1295-1538; that stretch reads IELDNVTASY…PTSIFKELYL (244 aa). N-linked (GlcNAc...) asparagine glycans are attached at residues Asn1299 and Asn1313. Residue 1328-1335 coordinates ATP; it reads GRTGSGKS.

It belongs to the ABC transporter superfamily. ABCC family. Conjugate transporter (TC 3.A.1.208) subfamily.

Its subcellular location is the cell membrane. ABC multidrug transporter; part of the gene cluster that mediates the biosynthesis of the lipopeptide antibiotics leucinostatins that show extensive biological activities, including antimalarial, antiviral, antibacterial, antifungal, and antitumor activities, as well as phytotoxic. May be involved in the efflux of leucinostatins. The chain is ABC multidrug transporter lscH from Purpureocillium lilacinum (Paecilomyces lilacinus).